Reading from the N-terminus, the 503-residue chain is Lysine--tRNA ligase (503 aa).

Positions 414 and 421 each coordinate Mg(2+).

The protein belongs to the class-II aminoacyl-tRNA synthetase family. In terms of assembly, homodimer. Mg(2+) serves as cofactor.

The protein localises to the cytoplasm. It catalyses the reaction tRNA(Lys) + L-lysine + ATP = L-lysyl-tRNA(Lys) + AMP + diphosphate. This Neisseria gonorrhoeae (strain NCCP11945) protein is Lysine--tRNA ligase.